The following is a 690-amino-acid chain: Xylosyl- and glucuronyltransferase LARGE2 (690 aa).

The Cytoplasmic portion of the chain corresponds to 1–8 (MLPRGRPR). The helical; Signal-anchor for type II membrane protein transmembrane segment at 9-29 (AMGAAVLLLLLLLVVGFFLFG) threads the bilayer. The Lumenal portion of the chain corresponds to 30 to 690 (RDPDYGLGTT…TALQQARSRA (661 aa)). N-linked (GlcNAc...) asparagine glycosylation is found at Asn51 and Asn78. The segment at 68-343 (LHVAIVCAGY…FLGYDGKLLR (276 aa)) is xylosyltransferase activity. Asp172 and Asp174 together coordinate Mn(2+). Residue Asn202 is glycosylated (N-linked (GlcNAc...) asparagine). Residues 344–686 (RELFGCPNQF…LKYLTALQQA (343 aa)) are glucuronyltransferase activity. Mn(2+) contacts are provided by Asp492 and Asp494.

This sequence in the C-terminal section; belongs to the glycosyltransferase 49 family. The protein in the N-terminal section; belongs to the glycosyltransferase 8 family. It belongs to the glycosyltransferase 8 family. As to quaternary structure, interacts with B4GAT1. The cofactor is Mn(2+). As to expression, highly expressed in the testis and kidney, but weakly expressed in the heart and brain. Expressed during embryogenesis from 7 dpc.

Its subcellular location is the golgi apparatus membrane. The enzyme catalyses 3-O-[beta-D-GlcA-(1-&gt;3)-beta-D-Xyl-(1-&gt;4)-Rib-ol-P-Rib-ol-P-3-beta-D-GalNAc-(1-&gt;3)-beta-D-GlcNAc-(1-&gt;4)-(O-6-P-alpha-D-Man)]-Thr-[protein] + UDP-alpha-D-xylose = 3-O-[alpha-D-Xyl-(1-&gt;3)-beta-D-GlcA-(1-&gt;4)-beta-D-Xyl-(1-&gt;4)-Rib-ol-P-Rib-ol-P-3-beta-D-GalNAc-(1-&gt;3)-beta-D-GlcNAc-(1-&gt;4)-(O-6-P-alpha-D-Man)]-Thr-[protein] + UDP + H(+). It catalyses the reaction 3-O-{(1-&gt;[3)-alpha-D-Xyl-(1-&gt;3)-beta-D-GlcA-(1-&gt;](n)-4)-beta-D-Xyl-(1-&gt;4)-Rib-ol-P-Rib-ol-P-3-beta-D-GalNAc-(1-&gt;3)-beta-D-GlcNAc-(1-&gt;4)-O-6-P-alpha-D-Man}-L-Thr-[protein] + UDP-alpha-D-glucuronate = 3-O-{beta-D-GlcA-(1-&gt;[3)-alpha-D-Xyl-(1-&gt;3)-beta-D-GlcA-(1-&gt;](n)-4)-beta-D-Xyl-(1-&gt;4)-Rib-ol-P-Rib-ol-P-3-beta-D-GalNAc-(1-&gt;3)-beta-D-GlcNAc-(1-&gt;4)-O-6-P-alpha-D-Man}-L-Thr-[protein] + UDP + H(+). The catalysed reaction is 3-O-{beta-D-GlcA-(1-&gt;[3)-alpha-D-Xyl-(1-&gt;3)-beta-D-GlcA-(1-&gt;](n)-4)-beta-D-Xyl-(1-&gt;4)-Rib-ol-P-Rib-ol-P-3-beta-D-GalNAc-(1-&gt;3)-beta-D-GlcNAc-(1-&gt;4)-O-6-P-alpha-D-Man}-L-Thr-[protein] + UDP-alpha-D-xylose = 3-O-{(1-&gt;[3)-alpha-D-Xyl-(1-&gt;3)-beta-D-GlcA-(1-&gt;](n+1)-4)-beta-D-Xyl-(1-&gt;4)-Rib-ol-P-Rib-ol-P-3-beta-D-GalNAc-(1-&gt;3)-beta-D-GlcNAc-(1-&gt;4)-O-6-P-alpha-D-Man}-L-Thr-[protein] + UDP + H(+). The protein operates within protein modification; protein glycosylation. Bifunctional glycosyltransferase with both alpha-1,3-xylosyltransferase and beta-1,3-glucuronyltransferase activities involved in the maturation of alpha-dystroglycan (DAG1) by glycosylation leading to DAG1 binding to laminin G-like domain-containing extracellular proteins with high affinity and in a phosphorylated-O-mannosyl trisaccharide dependent manner. Elongates the glucuronyl-beta-1,4-xylose-beta disaccharide primer structure by adding repeating units [-3-Xylose-alpha-1,3-GlcA-beta-1-] to produce a heteropolysaccharide. Supports the maturation of DAG1 more effectively than LARGE1. In addition, can modify both heparan sulfate (HS)- and chondroitin/dermatan sulfate (CS/DS)-proteoglycans (PGs), namely GPC4, with a glycosaminoglycan (GAG)-like polysaccharide composed of xylose and glucuronic acid to confer laminin binding. This Mus musculus (Mouse) protein is Xylosyl- and glucuronyltransferase LARGE2.